Consider the following 85-residue polypeptide: YcgL domain-containing protein ECA2367 (85 aa).

The region spanning 1-85 (MFCVIYRSVK…PVESLLTTPV (85 aa)) is the YcgL domain.

This is YcgL domain-containing protein ECA2367 from Pectobacterium atrosepticum (strain SCRI 1043 / ATCC BAA-672) (Erwinia carotovora subsp. atroseptica).